The sequence spans 71 residues: Ranatuerin-2P (71 aa).

The first 20 residues, 1–20 (MFTMKKSLLLFFFLGTISLS), serve as a signal peptide directing secretion. Positions 21-44 (LCEQERGADEDDGVEITEEEVKRG) are excised as a propeptide. A disulfide bond links cysteine 66 and cysteine 71.

As to expression, expressed by the skin glands.

The protein localises to the secreted. Its function is as follows. Antibacterial activity against Gram-positive bacterium S.aureus and Gram-negative bacterium E.coli. Has activity against C.albicans. The sequence is that of Ranatuerin-2P from Lithobates pipiens (Northern leopard frog).